The following is an 845-amino-acid chain: MNSSSASITYASRKRRKPVQKTVKPVPAEGIKSNPSKRHRDRLNTELDRLASLLPFPQDVVNKLDKLSVLRLSVSYLRAKSFFDVALKSTPADRNGVQDNCRTKFREGLNLQEGEFLLQALNGFVLVVTTDALVFYASSTIQDYLGFQQSDVIHQSVYELIHTEDRAEFQRQLHWALNPSQCPDSGQKMDEANGLSQPAVYYNPDQVPPENSSSMERCFVCRLRCLLDNSSGFLAMNFQGRLKYLHGQNKKGKDGSILPPQLALFAIATPLQPPSILEIRTKNFIFRTKHKLDFTPTGCDAKGRIVLGYTEAELCMRGSGYQFIHAADMLYCAEYHIRMIKTGESGLIVFRLLTKDNRWTWVQSNARLVYKNGRPDYIIATQRPLTDEEGTEHLRKRNLKLPFMFTTGEAVLYEVTNPFPPIMDPLPIRTKNGAGGKDSATKSTLSKDFLNPSSLLNAMMQQDESIYLYPASSSTPFERNFFSDSQNECSNWQNNVAPMGSDDILKHEQIGQSQEMNPTLSGDHAGLFPDNRNSDLYSIMKHLGIDFEDIKHMQQNEEFFRTDFSGEDDFRDIDLTDEILTYVEDSLNKSALGCSGYHPQQSMALNPSCMVQEHLQLEQQEQRQQHQKHRAVEQQQLCQKMQHMQVNGMFANWSSNQSGPFNCPQPDLQQYDVFSDVPGTSQEFPYKSEIDTMPYAQNFIPCSQSVLPPHSKGTQLDFPIGDFEPAPYPTTSSNLEDFVTCLQVPQSQRHGLNPQSAIVTPQTCYTGAVSMYQCQPEAQHSHVAQMQYNPTVPGPQAFLNKFQNGGVLNETYPAELNSINNTQPTTHLHPSEARPFSDLTSSGFL.

The propeptide occupies 1 to 10 (MNSSSASITY). The segment covering 1–10 (MNSSSASITY) has biased composition (polar residues). Residues 1-39 (MNSSSASITYASRKRRKPVQKTVKPVPAEGIKSNPSKRH) are disordered. 2 consecutive short sequence motifs (nuclear localization signal) follow at residues 13–16 (RKRR) and 37–42 (KRHRDR). Residues 27 to 80 (PAEGIKSNPSKRHRDRLNTELDRLASLLPFPQDVVNKLDKLSVLRLSVSYLRAK) enclose the bHLH domain. Required for maintaining the overall integrity of the AHR:ARNT heterodimer and its transcriptional activity regions lie at residues 50-82 (LASL…AKSF), 117-125 (LLQALNGFV), and 265-267 (FAI). Positions 64-72 (LDKLSVLRL) match the Nuclear export signal motif. The PAS 1 domain occupies 110 to 180 (NLQEGEFLLQ…RQLHWALNPS (71 aa)). A PAS 2 domain is found at 274–341 (PSILEIRTKN…CAEYHIRMIK (68 aa)). The PAC domain occupies 347 to 385 (LIVFRLLTKDNRWTWVQSNARLVYKNGRPDYIIATQRPL). A disordered region spans residues 820–845 (NNTQPTTHLHPSEARPFSDLTSSGFL).

Homodimer. Heterodimer; efficient DNA binding requires dimerization with another bHLH protein. Interacts with ARNT; the heterodimer ARNT:AHR binds to core DNA sequence 5'-TGCGTG-3' within the dioxin response element (DRE) of target gene promoters and activates their transcription. Binds MYBBP1A. Interacts with coactivators including SRC-1, RIP140 and NOCA7, and with the corepressor SMRT. Interacts with NEDD8 and IVNS1ABP. Interacts with BMAL1. Interacts with HSP90AB1. Interacts with TIPARP; leading to mono-ADP-ribosylation of AHR and subsequent inhibition of AHR. Mono-ADP-ribosylated, leading to inhibit transcription activator activity of AHR.

The protein resides in the cytoplasm. It is found in the nucleus. Ligand-activated transcription factor that enables cells to adapt to changing conditions by sensing compounds from the environment, diet, microbiome and cellular metabolism, and which plays important roles in development, immunity and cancer. Upon ligand binding, translocates into the nucleus, where it heterodimerizes with ARNT and induces transcription by binding to xenobiotic response elements (XRE). Regulates a variety of biological processes, including angiogenesis, hematopoiesis, drug and lipid metabolism, cell motility and immune modulation. Xenobiotics can act as ligands: upon xenobiotic-binding, activates the expression of multiple phase I and II xenobiotic chemical metabolizing enzyme genes (such as the CYP1A1 gene). Mediates biochemical and toxic effects of halogenated aromatic hydrocarbons. Next to xenobiotics, natural ligands derived from plants, microbiota, and endogenous metabolism are potent AHR agonists. Tryptophan (Trp) derivatives constitute an important class of endogenous AHR ligands. Acts as a negative regulator of anti-tumor immunity: indoles and kynurenic acid generated by Trp catabolism act as ligand and activate AHR, thereby promoting AHR-driven cancer cell motility and suppressing adaptive immunity. Regulates the circadian clock by inhibiting the basal and circadian expression of the core circadian component PER1. Inhibits PER1 by repressing the CLOCK-BMAL1 heterodimer mediated transcriptional activation of PER1. The heterodimer ARNT:AHR binds to core DNA sequence 5'-TGCGTG-3' within the dioxin response element (DRE) of target gene promoters and activates their transcription. The polypeptide is Aryl hydrocarbon receptor (AHR) (Delphinapterus leucas (Beluga whale)).